The following is a 55-amino-acid chain: Large ribosomal subunit protein bL33 (55 aa).

This sequence belongs to the bacterial ribosomal protein bL33 family.

This is Large ribosomal subunit protein bL33 from Caulobacter vibrioides (strain ATCC 19089 / CIP 103742 / CB 15) (Caulobacter crescentus).